The sequence spans 293 residues: Cbb3-type cytochrome c oxidase subunit FixP (293 aa).

Residues 1–11 (MSTSHESHHAP) are compositionally biased toward basic and acidic residues. A disordered region spans residues 1–25 (MSTSHESHHAPVDGAGGPSTTGHEW). A helical membrane pass occupies residues 43-63 (FYATIIWAFGYWVAYPAWPLV). 2 Cytochrome c domains span residues 114 to 201 (LARA…RSLS) and 209 to 290 (PAAK…HTLG). 8 residues coordinate heme c: Cys127, Cys130, His131, Met178, Cys222, Cys225, His226, and Met267.

This sequence belongs to the CcoP / FixP family. Component of the cbb3-type cytochrome c oxidase at least composed of FixN, FixO, FixQ and FixP. The cofactor is heme c.

The protein localises to the cell inner membrane. The protein operates within energy metabolism; oxidative phosphorylation. Functionally, C-type cytochrome. Part of the cbb3-type cytochrome c oxidase complex. FixP subunit is required for transferring electrons from donor cytochrome c via its heme groups to FixO subunit. From there, electrons are shuttled to the catalytic binuclear center of FixN subunit where oxygen reduction takes place. The complex also functions as a proton pump. This chain is Cbb3-type cytochrome c oxidase subunit FixP, found in Azorhizobium caulinodans (strain ATCC 43989 / DSM 5975 / JCM 20966 / LMG 6465 / NBRC 14845 / NCIMB 13405 / ORS 571).